The chain runs to 554 residues: (E)-nerolidol synthase TPS18VF (554 aa).

The (2E,6E)-farnesyl diphosphate site is built by arginine 276, aspartate 313, aspartate 317, arginine 455, and aspartate 458. Positions 313 and 317 each coordinate Mg(2+). A DDXXD motif motif is present at residues 313-317; it reads DDIFD. Positions 458, 462, and 466 each coordinate Mg(2+).

The protein belongs to the terpene synthase family. Tpsb subfamily. Mg(2+) is required as a cofactor. Mn(2+) serves as cofactor. In terms of tissue distribution, highly expressed in glandular trichomes.

The enzyme catalyses (2E,6E)-farnesyl diphosphate + H2O = (6E)-nerolidol + diphosphate. It carries out the reaction (2E)-geranyl diphosphate + H2O = (S)-linalool + diphosphate. Its pathway is secondary metabolite biosynthesis; terpenoid biosynthesis. Functionally, involved in sesquiterpene olefins biosynthesis, constituants of cannabinoids and terpenoids-rich resins. Catalyzes primarily the conversion of (2E)-farnesyl diphosphate to (E)-nerolidol, and the conversion of (2E)-geranyl diphosphate to (+)linalool. The sequence is that of (E)-nerolidol synthase TPS18VF from Cannabis sativa (Hemp).